The following is a 468-amino-acid chain: Chitoporin (468 aa).

The N-terminal stretch at 1–32 (MRTFSGKRSTLALAIAGVTAMSGFMAMPEARA) is a signal peptide.

The protein belongs to the outer membrane porin (Opr) (TC 1.B.25) family.

It localises to the cell outer membrane. Its function is as follows. Involved in the uptake of chitosugars. The polypeptide is Chitoporin (chiP) (Escherichia coli (strain K12)).